Consider the following 360-residue polypeptide: Peptide chain release factor 1 (360 aa).

Position 237 is an N5-methylglutamine (glutamine 237).

It belongs to the prokaryotic/mitochondrial release factor family. Methylated by PrmC. Methylation increases the termination efficiency of RF1.

The protein localises to the cytoplasm. Its function is as follows. Peptide chain release factor 1 directs the termination of translation in response to the peptide chain termination codons UAG and UAA. This chain is Peptide chain release factor 1, found in Cellvibrio japonicus (strain Ueda107) (Pseudomonas fluorescens subsp. cellulosa).